Here is a 378-residue protein sequence, read N- to C-terminus: Ribosomal RNA large subunit methyltransferase G (378 aa).

This sequence belongs to the methyltransferase superfamily. RlmG family.

It localises to the cytoplasm. The catalysed reaction is guanosine(1835) in 23S rRNA + S-adenosyl-L-methionine = N(2)-methylguanosine(1835) in 23S rRNA + S-adenosyl-L-homocysteine + H(+). Its function is as follows. Specifically methylates the guanine in position 1835 (m2G1835) of 23S rRNA. The chain is Ribosomal RNA large subunit methyltransferase G from Salmonella heidelberg (strain SL476).